The chain runs to 159 residues: Superoxide dismutase [Cu-Zn] (159 aa).

Cu cation contacts are provided by histidine 47, histidine 49, and histidine 64. Cysteines 58 and 150 form a disulfide. Histidine 64, histidine 72, histidine 81, and aspartate 84 together coordinate Zn(2+). Residue histidine 121 participates in Cu cation binding.

The protein belongs to the Cu-Zn superoxide dismutase family. It depends on Cu cation as a cofactor. Requires Zn(2+) as cofactor.

Its subcellular location is the cytoplasm. The enzyme catalyses 2 superoxide + 2 H(+) = H2O2 + O2. Destroys radicals which are normally produced within the cells and which are toxic to biological systems. This Haemonchus contortus (Barber pole worm) protein is Superoxide dismutase [Cu-Zn] (SOD).